The primary structure comprises 236 residues: CD81 antigen (236 aa).

Residues M1–Y12 lie on the Cytoplasmic side of the membrane. Residues L13–L33 form a helical membrane-spanning segment. Residues W34–Y63 lie on the Extracellular side of the membrane. Residues I64–I84 traverse the membrane as a helical segment. The Cytoplasmic segment spans residues Q85–C89. Residues L90–G112 traverse the membrane as a helical segment. Topologically, residues F113 to K201 are extracellular. Disulfide bonds link C156/C190 and C157/C175. Residues L202–M224 form a helical membrane-spanning segment. E219 is a binding site for cholesterol. Topologically, residues V225–Y236 are cytoplasmic.

This sequence belongs to the tetraspanin (TM4SF) family. As to quaternary structure, homodimer. Part of a complex composed of CD19, CR2/CD21, CD81 and IFITM1/CD225 in the membrane of mature B cells. Interacts (via the second extracellular domain) with CD19; this interaction is initiated early during biosynthesis in the ER and enables trafficking of only properly folded CD19. Part of a complex that includes MHC class II/HLA-DR molecules and IFITM1. Interacts with IFITM1. Interacts with IFITM2 and IFITM3. Part of integrin-tetraspanin complex composed of CD9, CD81, beta-1 and beta-2 integrins in the membrane of monocyte/macrophages. Interacts (via the second extracellular domain) with integrin ITGAV:ITGB3. Interacts with CD247/CD3 zeta, ICAM1 and CD9 at the immune synapse on T cell membrane. Part of a GPCR-tetraspanin complex consisting at least of ADGRG1, CD81, possibly CD9, and GNA11 in which CD81 enhances the association of ADGRG1 with GNA11. Part of a complex composed of CD9, CD81, PTGFRN and IGSF8. Interacts directly with IGSF8. Interacts with CD53 and SCIMP. Interacts with SAMHD1 (via its C-terminus). Interacts with glypican GPC3 and with the transcriptional repressor HHEX; binding to GPC3 decreases the availability of free CD81 for binding to HHEX, resulting in nuclear translocation of HHEX and transcriptional repression. Interacts with CLDN1. Interacts with CLDN6 and CLDN9. In terms of processing, not glycosylated. Post-translationally, likely constitutively palmitoylated at low levels. Protein palmitoylation is up-regulated upon coligation of BCR and CD9-C2R-CD81 complexes in lipid rafts.

Its subcellular location is the cell membrane. The protein localises to the basolateral cell membrane. Structural component of specialized membrane microdomains known as tetraspanin-enriched microdomains (TERMs), which act as platforms for receptor clustering and signaling. Essential for trafficking and compartmentalization of CD19 receptor on the surface of activated B cells. Upon initial encounter with microbial pathogens, enables the assembly of CD19-CR2/CD21 and B cell receptor (BCR) complexes at signaling TERMs, lowering the threshold dose of antigen required to trigger B cell clonal expansion and antibody production. In T cells, facilitates the localization of CD247/CD3 zeta at antigen-induced synapses with B cells, providing for costimulation and polarization toward T helper type 2 phenotype. Present in MHC class II compartments, may also play a role in antigen presentation. Can act both as positive and negative regulator of homotypic or heterotypic cell-cell fusion processes. Positively regulates sperm-egg fusion and may be involved in acrosome reaction. In myoblasts, associates with CD9 and PTGFRN and inhibits myotube fusion during muscle regeneration. In macrophages, associates with CD9 and beta-1 and beta-2 integrins, and prevents macrophage fusion into multinucleated giant cells specialized in ingesting complement-opsonized large particles. Also prevents the fusion of mononuclear cell progenitors into osteoclasts in charge of bone resorption. May regulate the compartmentalization of enzymatic activities. In T cells, defines the subcellular localization of dNTPase SAMHD1 and permits its degradation by the proteasome, thereby controlling intracellular dNTP levels. Also involved in cell adhesion and motility. Positively regulates integrin-mediated adhesion of macrophages, particularly relevant for the inflammatory response in the lung. This is CD81 antigen (Cd81) from Rattus norvegicus (Rat).